The chain runs to 185 residues: ATP synthase subunit b 2 (185 aa).

A disordered region spans residues 1-26 (MAQGHGDAKGTTAHTEAGGGHKAPFP). Residues 37–57 (LVSLAIAFVALYLIVSKIALP) traverse the membrane as a helical segment.

The protein belongs to the ATPase B chain family. As to quaternary structure, F-type ATPases have 2 components, F(1) - the catalytic core - and F(0) - the membrane proton channel. F(1) has five subunits: alpha(3), beta(3), gamma(1), delta(1), epsilon(1). F(0) has three main subunits: a(1), b(2) and c(10-14). The alpha and beta chains form an alternating ring which encloses part of the gamma chain. F(1) is attached to F(0) by a central stalk formed by the gamma and epsilon chains, while a peripheral stalk is formed by the delta and b chains.

Its subcellular location is the cell inner membrane. Functionally, f(1)F(0) ATP synthase produces ATP from ADP in the presence of a proton or sodium gradient. F-type ATPases consist of two structural domains, F(1) containing the extramembraneous catalytic core and F(0) containing the membrane proton channel, linked together by a central stalk and a peripheral stalk. During catalysis, ATP synthesis in the catalytic domain of F(1) is coupled via a rotary mechanism of the central stalk subunits to proton translocation. Component of the F(0) channel, it forms part of the peripheral stalk, linking F(1) to F(0). The b'-subunit is a diverged and duplicated form of b found in plants and photosynthetic bacteria. This Rhodopseudomonas palustris (strain ATCC BAA-98 / CGA009) protein is ATP synthase subunit b 2 (atpF2).